Reading from the N-terminus, the 450-residue chain is Bifunctional protein GlmU (450 aa).

The segment at 1-228 (MSTALVILAA…EAQTLGVNSR (228 aa)) is pyrophosphorylase. UDP-N-acetyl-alpha-D-glucosamine is bound by residues 8 to 11 (LAAG), lysine 22, glutamine 75, 80 to 81 (GT), 103 to 105 (YGD), glycine 140, glutamate 154, asparagine 169, and asparagine 226. Aspartate 105 contacts Mg(2+). Asparagine 226 contributes to the Mg(2+) binding site. Residues 229–249 (ADLAAADAIFQTRARAELLDL) are linker. The tract at residues 250–450 (GVTLMAPETV…AKKASKQKET (201 aa)) is N-acetyltransferase. Positions 315 and 333 each coordinate UDP-N-acetyl-alpha-D-glucosamine. Histidine 345 functions as the Proton acceptor in the catalytic mechanism. Residues tyrosine 348 and asparagine 359 each coordinate UDP-N-acetyl-alpha-D-glucosamine. Residues alanine 362, 368–369 (NY), serine 387, threonine 405, and arginine 422 contribute to the acetyl-CoA site.

It in the N-terminal section; belongs to the N-acetylglucosamine-1-phosphate uridyltransferase family. This sequence in the C-terminal section; belongs to the transferase hexapeptide repeat family. Homotrimer. Mg(2+) is required as a cofactor.

It localises to the cytoplasm. The catalysed reaction is alpha-D-glucosamine 1-phosphate + acetyl-CoA = N-acetyl-alpha-D-glucosamine 1-phosphate + CoA + H(+). It carries out the reaction N-acetyl-alpha-D-glucosamine 1-phosphate + UTP + H(+) = UDP-N-acetyl-alpha-D-glucosamine + diphosphate. The protein operates within nucleotide-sugar biosynthesis; UDP-N-acetyl-alpha-D-glucosamine biosynthesis; N-acetyl-alpha-D-glucosamine 1-phosphate from alpha-D-glucosamine 6-phosphate (route II): step 2/2. It participates in nucleotide-sugar biosynthesis; UDP-N-acetyl-alpha-D-glucosamine biosynthesis; UDP-N-acetyl-alpha-D-glucosamine from N-acetyl-alpha-D-glucosamine 1-phosphate: step 1/1. It functions in the pathway bacterial outer membrane biogenesis; LPS lipid A biosynthesis. Its function is as follows. Catalyzes the last two sequential reactions in the de novo biosynthetic pathway for UDP-N-acetylglucosamine (UDP-GlcNAc). The C-terminal domain catalyzes the transfer of acetyl group from acetyl coenzyme A to glucosamine-1-phosphate (GlcN-1-P) to produce N-acetylglucosamine-1-phosphate (GlcNAc-1-P), which is converted into UDP-GlcNAc by the transfer of uridine 5-monophosphate (from uridine 5-triphosphate), a reaction catalyzed by the N-terminal domain. The protein is Bifunctional protein GlmU of Ruegeria pomeroyi (strain ATCC 700808 / DSM 15171 / DSS-3) (Silicibacter pomeroyi).